Reading from the N-terminus, the 235-residue chain is NAD(P)H-quinone oxidoreductase subunit K, chloroplastic (235 aa).

Residues C43, C44, C108, and C139 each contribute to the [4Fe-4S] cluster site.

It belongs to the complex I 20 kDa subunit family. NDH is composed of at least 16 different subunits, 5 of which are encoded in the nucleus. It depends on [4Fe-4S] cluster as a cofactor.

It localises to the plastid. It is found in the chloroplast thylakoid membrane. The catalysed reaction is a plastoquinone + NADH + (n+1) H(+)(in) = a plastoquinol + NAD(+) + n H(+)(out). The enzyme catalyses a plastoquinone + NADPH + (n+1) H(+)(in) = a plastoquinol + NADP(+) + n H(+)(out). In terms of biological role, NDH shuttles electrons from NAD(P)H:plastoquinone, via FMN and iron-sulfur (Fe-S) centers, to quinones in the photosynthetic chain and possibly in a chloroplast respiratory chain. The immediate electron acceptor for the enzyme in this species is believed to be plastoquinone. Couples the redox reaction to proton translocation, and thus conserves the redox energy in a proton gradient. In Ipomoea purpurea (Common morning glory), this protein is NAD(P)H-quinone oxidoreductase subunit K, chloroplastic.